The following is a 281-amino-acid chain: Insulin-like growth factor-binding protein 7 (281 aa).

Positions 1-25 (MERPPRALLLGAAGLLLLLLPLSSS) are cleaved as a signal peptide. In terms of domain architecture, IGFBP N-terminal spans 27-113 (SSDACGPCVP…PATLAVCVCK (87 aa)). 8 cysteine pairs are disulfide-bonded: Cys-31-Cys-56, Cys-34-Cys-58, Cys-39-Cys-59, Cys-47-Cys-62, Cys-70-Cys-86, Cys-80-Cys-110, Cys-112-Cys-130, and Cys-119-Cys-155. Positions 98–157 (GAAAGGPATLAVCVCKSRYPVCGSNGITYPSGCQLRAASLRAESRGEKAITQVSKGTCEQ) constitute a Kazal-like domain. The Ig-like C2-type domain occupies 159 to 263 (PSIVTPPKDI…GQASAAAKIT (105 aa)). N-linked (GlcNAc...) asparagine glycosylation is present at Asn-170. Cysteines 180 and 247 form a disulfide. Phosphoserine is present on Ser-238.

As to quaternary structure, may interact with VPS24/CHMP3; the relevance of such interaction however remains unclear. Interacts with CD93; this interaction plays a role in endothelial cells angiogenesis. Post-translationally, N-glycosylated. As to expression, expressed at high levels in lung, kidney, small intestine, testis and uterus and at moderate levels in liver.

The protein resides in the secreted. Binds IGF1 and IGF2 with a relatively low affinity. Stimulates prostacyclin (PGI2) production. Stimulates cell adhesion. Acts as a ligand for CD93 to play a role in angiogenesis. The protein is Insulin-like growth factor-binding protein 7 (Igfbp7) of Mus musculus (Mouse).